The chain runs to 469 residues: GTPase Der (469 aa).

2 consecutive EngA-type G domains span residues 3–166 and 177–350; these read PVIA…PEDE and LRLA…ESAN. GTP-binding positions include 9 to 16, 56 to 60, 118 to 121, 183 to 190, 230 to 234, and 295 to 298; these read GRPNVGKS, DTGGI, NKVD, DTAGV, and NKWD. The region spanning 351 to 435 is the KH-like domain; that stretch reads LKVSPAKLTQ…PVKIEFKTSE (85 aa).

It belongs to the TRAFAC class TrmE-Era-EngA-EngB-Septin-like GTPase superfamily. EngA (Der) GTPase family. In terms of assembly, associates with the 50S ribosomal subunit.

Functionally, GTPase that plays an essential role in the late steps of ribosome biogenesis. The protein is GTPase Der of Acinetobacter baumannii (strain AB0057).